The following is a 150-amino-acid chain: Catabolic 3-dehydroquinase 1 (150 aa).

Tyr-24 functions as the Proton acceptor in the catalytic mechanism. Positions 75, 81, and 88 each coordinate substrate. His-101 acts as the Proton donor in catalysis. Substrate is bound by residues 102–103 (VS) and Arg-112.

This sequence belongs to the type-II 3-dehydroquinase family. As to quaternary structure, homododecamer. Adopts a ring-like structure, composed of an arrangement of two hexameric rings stacked on top of one another.

It catalyses the reaction 3-dehydroquinate = 3-dehydroshikimate + H2O. It participates in aromatic compound metabolism; 3,4-dihydroxybenzoate biosynthesis; 3,4-dihydroxybenzoate from 3-dehydroquinate: step 1/2. In terms of biological role, is involved in the catabolism of quinate. Allows the utilization of quinate as carbon source via the beta-ketoadipate pathway. The sequence is that of Catabolic 3-dehydroquinase 1 from Aspergillus fumigatus (strain ATCC MYA-4609 / CBS 101355 / FGSC A1100 / Af293) (Neosartorya fumigata).